The primary structure comprises 1008 residues: ATP-dependent DNA/RNA helicase DHX36 (1008 aa).

Residues 1-51 are required for recruitment to cytoplasmic stress granules; sequence MSYDYHQNWGRDGGPRSSGGGYGGGPAGGHGGNRGSGGGGGGGGGGRGGRG. Residues 1-58 form a disordered region; that stretch reads MSYDYHQNWGRDGGPRSSGGGYGGGPAGGHGGNRGSGGGGGGGGGGRGGRGRHPGHLK. Positions 1–104 are required for the pre-miR-134 transport; the sequence is MSYDYHQNWG…IVQLLNSVQA (104 aa). Positions 1 to 200 are necessary for nuclear and nucleolar caps localizations; the sequence is MSYDYHQNWG…KKNDLRYIEM (200 aa). Positions 16-48 are enriched in gly residues; sequence RSSGGGYGGGPAGGHGGNRGSGGGGGGGGGGRG. Residues 53 to 75 are DSM (DHX36-specific motif); the sequence is HPGHLKGREIGMWYAKKQGQKNK. The interval 53–105 is required for G4-DNA- and G4-RNA-binding; it reads HPGHLKGREIGMWYAKKQGQKNKEAERQERAVVHMDERREEQIVQLLNSVQAK. The stretch at 72-157 forms a coiled coil; sequence QKNKEAERQE…INQEKKMFRI (86 aa). RecA-like domain regions lie at residues 106-386 and 387-628; these read NDKE…MIHI and PGFT…DYQL. Position 161 is a phosphoserine (serine 161). The 171-residue stretch at 217 to 387 folds into the Helicase ATP-binding domain; that stretch reads VNLIDNHQVT…FGNCPMIHIP (171 aa). Residue 233-238 participates in ATP binding; sequence GCGKTT. The necessary for interaction with single-stranded DNA at the 3'-end of the G4-DNA structure stretch occupies residues 265–317; sequence RRISAISVAERVAAERAESCGSGNSTGYQIRLQSRLPRKQGSILYCTTGIILQ. The DEAH box motif lies at 334–337; sequence DEIH. Positions 335 and 337 each coordinate Mg(2+). Residues 477-647 enclose the Helicase C-terminal domain; the sequence is ALIRYIVLEE…ELCLQIKILR (171 aa). The necessary for interaction with single-stranded DNA at the 3'-end of the G4-DNA structure stretch occupies residues 498 to 557; that stretch reads WDNISTLHDLLMSQVMFKSDKFLIIPLHSLMPTVNQTQVFKRTPPGVRKIVIATNIAETS. The Nuclear localization signal signature appears at 517-528; it reads DKFLIIPLHSLM. ATP is bound by residues serine 557 and 602–605; that span reads RAGR. The interval 629-698 is WH domain; it reads PEILRTPLEE…LGVHLARLPV (70 aa). 3 necessary for interaction with single-stranded DNA at the 3'-end of the G4-DNA structure regions span residues 638–697, 849–860, and 870–900; these read ELCL…ARLP, NLGKKRKMVKVY, and HPKS…IYLY. The tract at residues 841–905 is OB-fold-like subdomains; it reads PKVAKIRLNL…SIYLYDCTEV (65 aa). Residue lysine 947 is modified to N6-acetyllysine. The residue at position 963 (serine 963) is a Phosphoserine.

This sequence belongs to the DEAD box helicase family. DEAH subfamily. Found in a multi-helicase-TICAM1 complex at least composed of DHX36, DDX1, DDX21 and TICAM1; this complex exists in resting cells with or without dsRNA poly(I:C) ligand stimulation. Interacts (via C-terminus) with TICAM1 (via TIR domain). Interacts (via C-terminus) with DDX21; this interaction serves as bridges to TICAM1. Interacts with TERT; this interaction is dependent on the ability of DHX36 to bind to the G-quadruplex RNA (G4-RNA) structure present in the telomerase RNA template component (TERC). Interacts with DKC1; this interaction is dependent on the ability of DHX36 to bind to the G4-RNA structure present in TERC. Interacts with PARN; this interaction stimulates PARN to enhance uPA mRNA decay. Interacts with EXOSC3; this interaction occurs in a RNase-insensitive manner. Interacts with EXOSC10; this interaction occurs in a RNase-insensitive manner. Interacts with ILF3; this interaction occurs in a RNA-dependent manner. Interacts with ELAVL1; this interaction occurs in an RNA-dependent manner. Interacts with DDX5; this interaction occurs in a RNA-dependent manner. Interacts with DDX17; this interaction occurs in a RNA-dependent manner. Interacts with HDAC1; this interaction occurs in a RNA-dependent manner. Interacts with HDAC3; this interaction occurs in a RNA-dependent manner. Interacts with HDAC4. Interacts with AGO1. Interacts with AGO2. Interacts with ERCC6. It depends on Mg(2+) as a cofactor. Highly expressed in testis.

The protein resides in the nucleus. It localises to the cytoplasm. It is found in the cytosol. Its subcellular location is the stress granule. The protein localises to the nucleus speckle. The protein resides in the chromosome. It localises to the telomere. It is found in the mitochondrion. Its subcellular location is the perikaryon. The protein localises to the cell projection. The protein resides in the dendrite. It localises to the axon. It catalyses the reaction ATP + H2O = ADP + phosphate + H(+). ATPase activity is enhanced in the presence of homomeric poly(U) RNAs, but not by double-stranded DNA (dsDNA), double-stranded RNA (dsRNA) and tRNA. In terms of biological role, multifunctional ATP-dependent helicase that unwinds G-quadruplex (G4) structures. Plays a role in many biological processes such as genomic integrity, gene expression regulations and as a sensor to initiate antiviral responses. G4 structures correspond to helical structures containing guanine tetrads. Binds with high affinity to and unwinds G4 structures that are formed in nucleic acids (G4-DNA and G4-RNA). Plays a role in genomic integrity. Converts the G4-RNA structure present in telomerase RNA template component (TREC) into a double-stranded RNA to promote P1 helix formation that acts as a template boundary ensuring accurate reverse transcription. Plays a role in transcriptional regulation. Resolves G4-DNA structures in promoters of genes, such as YY1, KIT/c-kit and ALPL and positively regulates their expression. Plays a role in post-transcriptional regulation. Unwinds a G4-RNA structure located in the 3'-UTR polyadenylation site of the pre-mRNA TP53 and stimulates TP53 pre-mRNA 3'-end processing in response to ultraviolet (UV)-induced DNA damage. Binds to the precursor-microRNA-134 (pre-miR-134) terminal loop and regulates its transport into the synapto-dendritic compartment. Involved in the pre-miR-134-dependent inhibition of target gene expression and the control of dendritic spine size. Plays a role in the regulation of cytoplasmic mRNA translation and mRNA stability. Binds to both G4-RNA structures and alternative non-quadruplex-forming sequence within the 3'-UTR of the PITX1 mRNA regulating negatively PITX1 protein expression. Binds to both G4-RNA structure in the 5'-UTR and AU-rich elements (AREs) localized in the 3'-UTR of NKX2-5 mRNA to either stimulate protein translation or induce mRNA decay in an ELAVL1-dependent manner, respectively. Also binds to ARE sequences present in several mRNAs mediating exosome-mediated 3'-5' mRNA degradation. Involved in cytoplasmic urokinase-type plasminogen activator (uPA) mRNA decay. Component of a multi-helicase-TICAM1 complex that acts as a cytoplasmic sensor of viral double-stranded RNA (dsRNA) and plays a role in the activation of a cascade of antiviral responses including the induction of pro-inflammatory cytokines via the adapter molecule TICAM1. Required for early embryonic development and hematopoiesis. Involved in the regulation of cardioblast differentiation and proliferation during heart development. Involved in spermatogonia differentiation. May play a role in ossification. The polypeptide is ATP-dependent DNA/RNA helicase DHX36 (Homo sapiens (Human)).